We begin with the raw amino-acid sequence, 660 residues long: MASTLSPSTVTKTPGPPEISERIQNAADISVIVIYFVVVMAVGLWAMLRTNRGTVGGFFLAGRDVTWWPMGASLFASNIGSGHFVGLAGTGAASGIAIAAFEWNALLLLLVLGWFFVPIYIKAGVMTMPEYLRKRFGGKRLQIYLSILSLFICVALRISSDIFSGAIFIKLALGLDLYLAIFSLLAITAIYTITGGLASVIYTDTLQTIIMLIGSFILMGFAFVEVGGYESFTEKYMNAIPTIVEGDNLTISPKCYTPQGDSFHIFRDAVTGDIPWPGMIFGMTVVAAWYWCTDQVIVQRCLSGKDMSHVKAACIMCGYLKLLPMFLMVMPGMISRILYTEKVACVVPSECVKHCGTEVGCSNYAYPLLVMELMPSGLRGLMLSVMLASLMSSLTSIFNSASTLFTMDLYTKIRKQASEKELLIAGRLFIILLIVISIVWVPLVQVAQNGQLFHYIESISSYLGPPIAAVFLLAIFCKRVNEQGAFWGLIIGFVMGLIRMIAEFVYGTGSCLAASNCPQIICGVHYLYFALILFFVSILVVLAISLLTKPIPDVHLYRLCWALRNSTEERIDLDAEEKRHEEAHDGVDEDNPEETRGCLRKAYDLFCGLQRKGPKLSKEEEEAQKRKLTDTSEKPLWKTIVNINAILLLAVAVFVHGYFA.

At methionine 1–aspartate 28 the chain is on the cytoplasmic side. The helical transmembrane segment at isoleucine 29–methionine 47 threads the bilayer. Residues leucine 48–aspartate 64 lie on the Extracellular side of the membrane. Residues valine 65–valine 85 traverse the membrane as a helical segment. The Cytoplasmic portion of the chain corresponds to glycine 86–alanine 105. A helical membrane pass occupies residues leucine 106–methionine 126. The Extracellular portion of the chain corresponds to threonine 127–leucine 171. A helical membrane pass occupies residues alanine 172–tyrosine 191. At threonine 192–threonine 208 the chain is on the cytoplasmic side. The helical transmembrane segment at isoleucine 209–tyrosine 229 threads the bilayer. Residues glutamate 230–valine 270 lie on the Extracellular side of the membrane. Asparagine 248 is a glycosylation site (N-linked (GlcNAc...) asparagine). A helical transmembrane segment spans residues threonine 271–tryptophan 291. Topologically, residues cysteine 292–cysteine 314 are cytoplasmic. The helical transmembrane segment at isoleucine 315–isoleucine 334 threads the bilayer. Residues serine 335–leucine 423 are Extracellular-facing. Residues isoleucine 424–leucine 443 traverse the membrane as a helical segment. The Cytoplasmic portion of the chain corresponds to valine 444 to tyrosine 455. The helical transmembrane segment at isoleucine 456–phenylalanine 476 threads the bilayer. Residues cysteine 477 to tyrosine 526 are Extracellular-facing. A helical transmembrane segment spans residues leucine 527–leucine 547. Residues threonine 548 to lysine 638 are Cytoplasmic-facing. Residues threonine 639–phenylalanine 659 form a helical membrane-spanning segment.

The protein belongs to the sodium:solute symporter (SSF) (TC 2.A.21) family. Kidney, intestine, liver, skeletal muscle and spleen.

The protein localises to the cell membrane. The catalysed reaction is D-glucose(out) + 2 Na(+)(out) = D-glucose(in) + 2 Na(+)(in). With respect to regulation, inhibited by phlorizin. Functionally, low-affinity sodium/D-glucose symporter with a great selectivity for sugars (D-glucose &gt;&gt; D-galactose). Na(+) and D-glucose transport are tightly coupled at neutral pH, but at acidic pH, ion transport is uncoupled from sugar transport. The sequence is that of Solute carrier family 5 member 4 from Sus scrofa (Pig).